Here is a 33-residue protein sequence, read N- to C-terminus: Rugosin-A (33 aa).

Cys27 and Cys33 are disulfide-bonded.

Belongs to the frog skin active peptide (FSAP) family. Brevinin subfamily. Expressed by the skin glands.

It is found in the secreted. Has antibacterial activity against Gram-positive bacteria. The chain is Rugosin-A from Glandirana rugosa (Japanese wrinkled frog).